A 382-amino-acid polypeptide reads, in one-letter code: 6-hydroxynicotinate 3-monooxygenase (382 aa).

Residues 1 to 25 (MRGRQKIAIVGAGLGGAAAATLLQQ) form the signal peptide. FAD-binding positions include G15, 34–35 (EQ), H47, R108, and L130. Residue H47 is the Proton acceptor of the active site. The Proton acceptor role is filled by Y215. FAD-binding positions include D294 and 307–308 (AC).

The protein belongs to the 6-hydroxynicotinate 3-monooxygenase family. Monomer. It depends on FAD as a cofactor.

It catalyses the reaction 6-hydroxynicotinate + NADH + O2 + 2 H(+) = 2,5-dihydroxypyridine + CO2 + NAD(+) + H2O. It functions in the pathway cofactor degradation; nicotinate degradation. Flavin-dependent monooxygenase (FMO) that catalyzes the decarboxylative hydroxylation of 6-hydroxynicotinic acid (6-HNA) to 2,5-dihydroxypyridine (2,5-DHP) with concomitant oxidation of NADH, a step in the aerobic nicotinate degradation pathway. The protein is 6-hydroxynicotinate 3-monooxygenase of Pseudomonas putida (strain ATCC 47054 / DSM 6125 / CFBP 8728 / NCIMB 11950 / KT2440).